We begin with the raw amino-acid sequence, 89 residues long: Small ribosomal subunit protein uS15 (89 aa).

It belongs to the universal ribosomal protein uS15 family. As to quaternary structure, part of the 30S ribosomal subunit. Forms a bridge to the 50S subunit in the 70S ribosome, contacting the 23S rRNA.

In terms of biological role, one of the primary rRNA binding proteins, it binds directly to 16S rRNA where it helps nucleate assembly of the platform of the 30S subunit by binding and bridging several RNA helices of the 16S rRNA. Functionally, forms an intersubunit bridge (bridge B4) with the 23S rRNA of the 50S subunit in the ribosome. The polypeptide is Small ribosomal subunit protein uS15 (Streptococcus pyogenes serotype M2 (strain MGAS10270)).